The sequence spans 199 residues: MAEPTLASGWYPRLVVGLGNPGKNYGRTRHNVGFMVANLLAVRLGSKFEVHKRSGADVVNGRLAGCSMLVAKPRNYMNESGQQVGLLAKLYSVTPADIIIVHDDLDLDFGRIRLKLGGGEGGHNGLRSVAAALGTKDFQRVRIGIGRPTGRKDPASFVLENFTTAERMQVPTICKRAADATELLVGLGLEPAQNHVHAW.

Residue Tyr25 participates in tRNA binding. The Proton acceptor role is filled by His30. Residues Tyr76, Asn78, and Asn124 each contribute to the tRNA site.

This sequence belongs to the PTH family. Monomer.

It localises to the cytoplasm. It catalyses the reaction an N-acyl-L-alpha-aminoacyl-tRNA + H2O = an N-acyl-L-amino acid + a tRNA + H(+). Its function is as follows. Hydrolyzes ribosome-free peptidyl-tRNAs (with 1 or more amino acids incorporated), which drop off the ribosome during protein synthesis, or as a result of ribosome stalling. In terms of biological role, catalyzes the release of premature peptidyl moieties from peptidyl-tRNA molecules trapped in stalled 50S ribosomal subunits, and thus maintains levels of free tRNAs and 50S ribosomes. This is Peptidyl-tRNA hydrolase from Mycobacterium leprae (strain Br4923).